We begin with the raw amino-acid sequence, 368 residues long: DNA replication and repair protein RecF (368 aa).

Position 30-37 (30-37 (GNNAQGKT)) interacts with ATP.

It belongs to the RecF family.

The protein localises to the cytoplasm. The RecF protein is involved in DNA metabolism; it is required for DNA replication and normal SOS inducibility. RecF binds preferentially to single-stranded, linear DNA. It also seems to bind ATP. In Streptococcus pyogenes serotype M5 (strain Manfredo), this protein is DNA replication and repair protein RecF.